The primary structure comprises 279 residues: Large ribosomal subunit protein uL3 (279 aa).

Gln-151 carries the post-translational modification N5-methylglutamine.

The protein belongs to the universal ribosomal protein uL3 family. In terms of assembly, part of the 50S ribosomal subunit. Forms a cluster with proteins L14 and L19. Methylated by PrmB.

Functionally, one of the primary rRNA binding proteins, it binds directly near the 3'-end of the 23S rRNA, where it nucleates assembly of the 50S subunit. The sequence is that of Large ribosomal subunit protein uL3 from Dinoroseobacter shibae (strain DSM 16493 / NCIMB 14021 / DFL 12).